The following is a 73-amino-acid chain: Large ribosomal subunit protein bL31 (73 aa).

This sequence belongs to the bacterial ribosomal protein bL31 family. Type A subfamily. As to quaternary structure, part of the 50S ribosomal subunit.

Functionally, binds the 23S rRNA. The polypeptide is Large ribosomal subunit protein bL31 (Cereibacter sphaeroides (strain ATCC 17029 / ATH 2.4.9) (Rhodobacter sphaeroides)).